The primary structure comprises 311 residues: Manganese-dependent inorganic pyrophosphatase (311 aa).

Mn(2+) contacts are provided by His10, Asp14, Asp16, Asp75, His97, and Asp149.

This sequence belongs to the PPase class C family. In terms of assembly, homodimer. Requires Mn(2+) as cofactor.

It carries out the reaction diphosphate + H2O = 2 phosphate + H(+). This is Manganese-dependent inorganic pyrophosphatase (ppaC) from Methanothrix thermoacetophila (strain DSM 6194 / JCM 14653 / NBRC 101360 / PT) (Methanosaeta thermophila).